Reading from the N-terminus, the 416-residue chain is Gamma-glutamyl phosphate reductase (416 aa).

Belongs to the gamma-glutamyl phosphate reductase family.

The protein localises to the cytoplasm. The catalysed reaction is L-glutamate 5-semialdehyde + phosphate + NADP(+) = L-glutamyl 5-phosphate + NADPH + H(+). It participates in amino-acid biosynthesis; L-proline biosynthesis; L-glutamate 5-semialdehyde from L-glutamate: step 2/2. Its function is as follows. Catalyzes the NADPH-dependent reduction of L-glutamate 5-phosphate into L-glutamate 5-semialdehyde and phosphate. The product spontaneously undergoes cyclization to form 1-pyrroline-5-carboxylate. This chain is Gamma-glutamyl phosphate reductase, found in Salmonella typhi.